A 167-amino-acid polypeptide reads, in one-letter code: Bacterial non-heme ferritin (167 aa).

Residues M1–G145 form the Ferritin-like diiron domain. Fe cation is bound by residues E17, E50, H53, E94, and Q127.

This sequence belongs to the ferritin family. Prokaryotic subfamily. Homooligomer of 24 subunits that assemble into a spherical protein shell (12 +/- 1 nM diameter) that can sequester at least 2000 iron atoms.

Its subcellular location is the cytoplasm. It catalyses the reaction 4 Fe(2+) + O2 + 6 H2O = 4 iron(III) oxide-hydroxide + 12 H(+). In terms of biological role, iron-storage protein. This chain is Bacterial non-heme ferritin (ftnA), found in Helicobacter pylori (strain J99 / ATCC 700824) (Campylobacter pylori J99).